We begin with the raw amino-acid sequence, 124 residues long: Small ribosomal subunit protein uS12 (124 aa).

Over residues 11 to 20 the composition is skewed to basic residues; the sequence is GRKRLKKKSK. Residues 11–30 are disordered; it reads GRKRLKKKSKSPALENNPQK. Residue D89 is modified to 3-methylthioaspartic acid. Residues 105–124 are disordered; the sequence is EGVANRRQSRSRYGAKKPKK. Over residues 111-124 the composition is skewed to basic residues; the sequence is RQSRSRYGAKKPKK.

The protein belongs to the universal ribosomal protein uS12 family. In terms of assembly, part of the 30S ribosomal subunit. Contacts proteins S8 and S17. May interact with IF1 in the 30S initiation complex.

With S4 and S5 plays an important role in translational accuracy. Its function is as follows. Interacts with and stabilizes bases of the 16S rRNA that are involved in tRNA selection in the A site and with the mRNA backbone. Located at the interface of the 30S and 50S subunits, it traverses the body of the 30S subunit contacting proteins on the other side and probably holding the rRNA structure together. The combined cluster of proteins S8, S12 and S17 appears to hold together the shoulder and platform of the 30S subunit. This Kosmotoga olearia (strain ATCC BAA-1733 / DSM 21960 / TBF 19.5.1) protein is Small ribosomal subunit protein uS12.